Here is a 245-residue protein sequence, read N- to C-terminus: 4-hydroxy-tetrahydrodipicolinate reductase (245 aa).

NAD(+)-binding positions include 7–12 (GAKGKV), 75–77 (GTT), and 102–105 (APNF). The active-site Proton donor/acceptor is the His-132. Position 133 (His-133) interacts with (S)-2,3,4,5-tetrahydrodipicolinate. Lys-136 functions as the Proton donor in the catalytic mechanism. 142-143 (GT) is a (S)-2,3,4,5-tetrahydrodipicolinate binding site.

This sequence belongs to the DapB family.

The protein resides in the cytoplasm. It carries out the reaction (S)-2,3,4,5-tetrahydrodipicolinate + NAD(+) + H2O = (2S,4S)-4-hydroxy-2,3,4,5-tetrahydrodipicolinate + NADH + H(+). It catalyses the reaction (S)-2,3,4,5-tetrahydrodipicolinate + NADP(+) + H2O = (2S,4S)-4-hydroxy-2,3,4,5-tetrahydrodipicolinate + NADPH + H(+). It participates in amino-acid biosynthesis; L-lysine biosynthesis via DAP pathway; (S)-tetrahydrodipicolinate from L-aspartate: step 4/4. In terms of biological role, catalyzes the conversion of 4-hydroxy-tetrahydrodipicolinate (HTPA) to tetrahydrodipicolinate. This chain is 4-hydroxy-tetrahydrodipicolinate reductase, found in Mycobacterium bovis (strain ATCC BAA-935 / AF2122/97).